The following is a 417-amino-acid chain: MLEQMGIAAKQASYKLAQLSSREKNRVLEKIADELEAQSEIILNANAQDVADARANGLSEAMLDRLALTPARLKGIADDVRQVCNLADPVGRVIDGGVLDSGLRLERRRVPLGVIGVIYEARPNVTVDVASLCLKTGNAVILRGGKETCRTNAATVAVIQDALKSCGLPAGAVQAIDNPDRALVSEMLRMDKYIDMLIPRGGAGLHKLCREQSTIPVITGGIGVCHIYVDESAEIAEALKVIVNAKTQRPSTCNTVETLLVNKNIADSFLPALSKQMAESGVTLHADAAALAQLQTGPAKVVAVKAEEYDDEFLSLDLNVKIVSDLDDAIAHIREHGTQHSDAILTRDMRNAQRFVNEVDSSAVYVNASTRFTDGGQFGLGAEVAVSTQKLHARGPMGLEALTTYKWIGIGDYTIRA.

Belongs to the gamma-glutamyl phosphate reductase family.

The protein resides in the cytoplasm. It catalyses the reaction L-glutamate 5-semialdehyde + phosphate + NADP(+) = L-glutamyl 5-phosphate + NADPH + H(+). The protein operates within amino-acid biosynthesis; L-proline biosynthesis; L-glutamate 5-semialdehyde from L-glutamate: step 2/2. In terms of biological role, catalyzes the NADPH-dependent reduction of L-glutamate 5-phosphate into L-glutamate 5-semialdehyde and phosphate. The product spontaneously undergoes cyclization to form 1-pyrroline-5-carboxylate. This chain is Gamma-glutamyl phosphate reductase, found in Escherichia coli O7:K1 (strain IAI39 / ExPEC).